We begin with the raw amino-acid sequence, 334 residues long: DNA polymerase III subunit delta' (334 aa).

As to quaternary structure, the DNA polymerase III holoenzyme complex contains at least 10 different subunits organized into 3 functionally essential subassemblies: the Pol III core, the beta sliding clamp processivity factor and the clamp-loading complex. The Pol III core (subunits alpha, epsilon and theta) contains the polymerase and the 3'-5' exonuclease proofreading activities. The polymerase is tethered to the template via the dimeric beta sliding clamp processivity factor. The clamp-loading complex (also called gamma complex) assembles the beta sliding clamp onto the primed template and plays a central role in the organization and communication at the replication fork. The clamp-loading complex contains delta, delta', psi and chi, and 3 copies of either or both of two different DnaX proteins, gamma and tau. The DNA replisome complex has a single clamp loader (3 tau and 1 each of delta, delta', psi and chi subunits) which binds 3 Pol III cores (1 core on the leading strand and 2 on the lagging strand) each with a beta sliding clamp dimer. Additional proteins in the replisome are other copies of gamma, psi and chi, Ssb, DNA helicase and RNA primase. The clamp loader hydrolyzes ATP to assemble the beta processivity factor onto the primed template and plays a central role in the organization and communication at the replication fork; the minimal complex to load the beta sliding clamp on DNA is delta, delta', gamma.

The enzyme catalyses DNA(n) + a 2'-deoxyribonucleoside 5'-triphosphate = DNA(n+1) + diphosphate. Part of the beta sliding clamp loading complex, which hydrolyzes ATP to load the beta clamp onto primed DNA to form the DNA replication pre-initiation complex. DNA polymerase III is a complex, multichain enzyme responsible for most of the replicative synthesis in bacteria. This DNA polymerase also exhibits 3' to 5' exonuclease activity. The gamma complex (gamma(3),delta,delta') is thought to load beta dimers onto DNA by binding ATP which alters the complex's conformation so it can bind beta sliding clamp dimers and open them at one interface. Primed DNA is recognized, ATP is hydrolyzed releasing the gamma complex and closing the beta sliding clamp ring around the primed DNA. The chain is DNA polymerase III subunit delta' (holB) from Escherichia coli (strain K12).